Consider the following 472-residue polypeptide: Relaxin-3 receptor 1 (472 aa).

Residues methionine 1–arginine 81 are Extracellular-facing. N-linked (GlcNAc...) asparagine glycosylation is found at asparagine 36 and asparagine 40. The chain crosses the membrane as a helical span at residues isoleucine 82 to valine 102. At leucine 103–leucine 119 the chain is on the cytoplasmic side. Residues phenylalanine 120–valine 140 traverse the membrane as a helical segment. Topologically, residues glutamate 141–lysine 156 are extracellular. Cysteine 155 and cysteine 247 form a disulfide bridge. A helical transmembrane segment spans residues isoleucine 157–serine 177. The Cytoplasmic portion of the chain corresponds to valine 178–lysine 215. Residues valine 216–serine 236 traverse the membrane as a helical segment. Residues threonine 237–glutamine 270 are Extracellular-facing. A helical membrane pass occupies residues lysine 271–valine 291. Topologically, residues arginine 292–arginine 298 are cytoplasmic. Residues valine 299–alanine 319 traverse the membrane as a helical segment. Residues serine 320 to threonine 332 are Extracellular-facing. A helical membrane pass occupies residues isoleucine 333–isoleucine 353. Over leucine 354–tyrosine 472 the chain is Cytoplasmic.

Belongs to the G-protein coupled receptor 1 family.

The protein localises to the cell membrane. Its function is as follows. Receptor for RNL3/relaxin-3. Binding of the ligand inhibit cAMP accumulation. This chain is Relaxin-3 receptor 1 (Rxfp3), found in Mus musculus (Mouse).